We begin with the raw amino-acid sequence, 543 residues long: Cytochrome P450 monooxygenase 205 (543 aa).

A helical membrane pass occupies residues 9-29; it reads LISLGVAALAVAVWKAIVMVI. Residues Asn332 and Asn434 are each glycosylated (N-linked (GlcNAc...) asparagine). Cys479 contacts heme.

This sequence belongs to the cytochrome P450 family. Heme serves as cofactor.

The protein localises to the membrane. It functions in the pathway secondary metabolite biosynthesis. Cytochrome P450 monooxygenase that is able to use carbazole and phenanthrene as substrates for oxidation. The sequence is that of Cytochrome P450 monooxygenase 205 from Postia placenta (strain ATCC 44394 / Madison 698-R) (Brown rot fungus).